We begin with the raw amino-acid sequence, 209 residues long: Ribosomal RNA large subunit methyltransferase E (209 aa).

S-adenosyl-L-methionine contacts are provided by Gly63, Trp65, Asp83, Asp99, and Asp124. Lys164 functions as the Proton acceptor in the catalytic mechanism.

This sequence belongs to the class I-like SAM-binding methyltransferase superfamily. RNA methyltransferase RlmE family.

The protein localises to the cytoplasm. The enzyme catalyses uridine(2552) in 23S rRNA + S-adenosyl-L-methionine = 2'-O-methyluridine(2552) in 23S rRNA + S-adenosyl-L-homocysteine + H(+). In terms of biological role, specifically methylates the uridine in position 2552 of 23S rRNA at the 2'-O position of the ribose in the fully assembled 50S ribosomal subunit. In Proteus mirabilis (strain HI4320), this protein is Ribosomal RNA large subunit methyltransferase E.